The chain runs to 215 residues: Pyrrolidone-carboxylate peptidase (215 aa).

Catalysis depends on residues glutamate 78, cysteine 141, and histidine 165.

This sequence belongs to the peptidase C15 family. In terms of assembly, homotetramer.

The protein localises to the cytoplasm. The enzyme catalyses Release of an N-terminal pyroglutamyl group from a polypeptide, the second amino acid generally not being Pro.. In terms of biological role, removes 5-oxoproline from various penultimate amino acid residues except L-proline. The chain is Pyrrolidone-carboxylate peptidase from Lactobacillus johnsonii (strain CNCM I-12250 / La1 / NCC 533).